Here is a 284-residue protein sequence, read N- to C-terminus: 2-dehydro-3-deoxyphosphooctonate aldolase (284 aa).

Belongs to the KdsA family.

The protein localises to the cytoplasm. It carries out the reaction D-arabinose 5-phosphate + phosphoenolpyruvate + H2O = 3-deoxy-alpha-D-manno-2-octulosonate-8-phosphate + phosphate. It functions in the pathway carbohydrate biosynthesis; 3-deoxy-D-manno-octulosonate biosynthesis; 3-deoxy-D-manno-octulosonate from D-ribulose 5-phosphate: step 2/3. Its pathway is bacterial outer membrane biogenesis; lipopolysaccharide biosynthesis. The protein is 2-dehydro-3-deoxyphosphooctonate aldolase of Burkholderia orbicola (strain MC0-3).